A 456-amino-acid chain; its full sequence is Adenylosuccinate synthetase isozyme 2 (456 aa).

Residues 1 to 14 are compositionally biased toward polar residues; it reads MSISESSPAATSLP. A disordered region spans residues 1 to 24; the sequence is MSISESSPAATSLPNGDCGRPRAR. Residues 39 to 45 and 67 to 69 contribute to the GTP site; these read GDEGKGK and GHT. Catalysis depends on D40, which acts as the Proton acceptor. Residues D40 and G67 each coordinate Mg(2+). Residue D40 participates in substrate binding. Residues 40 to 43, 65 to 68, T162, R176, N255, T270, and R334 contribute to the IMP site; these read DEGK and NAGH. H68 serves as the catalytic Proton donor. 330 to 336 serves as a coordination point for substrate; it reads VTTGRKR. Residues R336, 362 to 364, and 444 to 447 each bind GTP; these read KLD and GVGK.

Belongs to the adenylosuccinate synthetase family. Homodimer. Mg(2+) serves as cofactor.

The protein resides in the cytoplasm. Its subcellular location is the mitochondrion. The catalysed reaction is IMP + L-aspartate + GTP = N(6)-(1,2-dicarboxyethyl)-AMP + GDP + phosphate + 2 H(+). It participates in purine metabolism; AMP biosynthesis via de novo pathway; AMP from IMP: step 1/2. Its activity is regulated as follows. Inhibited competitively by AMP and IMP and non-competitively by fructose 1,6-bisphosphate. In terms of biological role, plays an important role in the de novo pathway and in the salvage pathway of purine nucleotide biosynthesis. Catalyzes the first committed step in the biosynthesis of AMP from IMP. This Mus musculus (Mouse) protein is Adenylosuccinate synthetase isozyme 2 (Adss2).